A 139-amino-acid chain; its full sequence is Transcription antitermination protein NusB (139 aa).

Belongs to the NusB family.

Involved in transcription antitermination. Required for transcription of ribosomal RNA (rRNA) genes. Binds specifically to the boxA antiterminator sequence of the ribosomal RNA (rrn) operons. This is Transcription antitermination protein NusB from Pectobacterium carotovorum subsp. carotovorum (strain PC1).